Consider the following 614-residue polypeptide: Probable glycerol-3-phosphate dehydrogenase (614 aa).

Residue 57 to 85 coordinates FAD; the sequence is DLVVVGGGSTGAGCALDGATRGLKVALVD. The interval 595–614 is disordered; sequence MECPEEKRHRGERRLPPQEK. Basic and acidic residues predominate over residues 598–614; sequence PEEKRHRGERRLPPQEK.

This sequence belongs to the FAD-dependent glycerol-3-phosphate dehydrogenase family. It depends on FAD as a cofactor.

Its subcellular location is the cytoplasm. It carries out the reaction a quinone + sn-glycerol 3-phosphate = dihydroxyacetone phosphate + a quinol. Its pathway is polyol metabolism; glycerol degradation via glycerol kinase pathway; glycerone phosphate from sn-glycerol 3-phosphate (anaerobic route): step 1/1. This chain is Probable glycerol-3-phosphate dehydrogenase, found in Encephalitozoon cuniculi (strain GB-M1) (Microsporidian parasite).